An 852-amino-acid chain; its full sequence is MGCRGPWLHTCLLWAAVASLLLPPAVTQQLRGAGLGPSTWINNAGAPGPSGEAAAAGLGHHGHSHRSPGEENEDVSMENGHHFWSHRDHGETDDEVSREYGHQPQGHRYHSPEAGDESVSEEGVHREQARQAPGHGGHGEAGAEDLAEHGSHGHGHEEEDEDVISSERPRHVLRRAPRGHGGEEEGEEEEEEEEVSPEHRHRGHGKEDEEDEDDDSTESDRHQAHRHRGHREEEDEDDDDDEGDSTESDHHQAHRHRGHEEEEDEEDDDDEGDSTESDRHQAHRHRGHREEEDEDDDDEGDSTESDRHQAHRHRGHREEEDDDDDDDEGDSTESDRHQAHRHRGHREEEDEDDDDEGDSTESDRHQAHRHRGHREEEDEDDDDEGDSTESDRHQAHRHRGHREEEDEDDDDEGDSTESDHHQAHRHRGHREEEDEEDDDEGDSTESDRHQAHRHRGHGEEEDEDDDDEGEHHHVPHRGHRGHEEDDGGDDDDGDDSTENGHQAHRHQGHGKEEAEVTSDEHHHHVPDHGHQGHGDKEGEEEGVSTDHWHQVPRHAHHGPGGEEEGGEEELTVKAGHHVASHPPPGHRSREGHAEEHQTEVPGHHQHRMGDTDTSAERGHPASSPRQQGHPPEDTVHHHRGSLKEEVGPESPGPAGVKDGSRVKRGGSEEEEEQKGTHHHSLEDEEDEEEGHGRSLSQEDQEEEDRRGESAKVQAPLRHHREEEEEEEEEEEEEGRLPFTIIPNPLSGREAAGGASSEESAEDTGPEDTQEYGNYQQGSLCGYCTFCNRCTECEHCHCDEDSMGEHCDQCQHCQFCYLCPLVCETVCTPGSYVDYFSSSLYKALADMLETPEP.

Residues 1–27 (MGCRGPWLHTCLLWAAVASLLLPPAVT) form the signal peptide. Gln-28 is subject to Pyrrolidone carboxylic acid. Positions 44–58 (AGAPGPSGEAAAAGL) are enriched in low complexity. A disordered region spans residues 44–770 (AGAPGPSGEA…EDTGPEDTQE (727 aa)). 2 consecutive repeat copies span residues 59 to 79 (GHHGHSHRSPGEENEDVSMEN) and 80 to 100 (GHHFWSHRDHGETDDEVSREY). Positions 59–100 (GHHGHSHRSPGEENEDVSMENGHHFWSHRDHGETDDEVSREY) are 2 X approximate tandem repeats. Residues 79–101 (NGHHFWSHRDHGETDDEVSREYG) are compositionally biased toward basic and acidic residues. At Ser-120 the chain carries Phosphoserine. A compositionally biased stretch (basic and acidic residues) spans 146–157 (LAEHGSHGHGHE). Acidic residues-rich tracts occupy residues 184–195 (EEGEEEEEEEEV), 208–217 (DEEDEDDDST), 233–246 (EEDEDDDDDEGDST), 261–275 (EEEDEEDDDDEGDST), 291–303 (EEDEDDDDEGDST), 319–332 (EEDDDDDDDEGDST), 348–360 (EEDEDDDDEGDST), 376–388 (EEDEDDDDEGDST), 404–416 (EEDEDDDDEGDST), 432–444 (EEDEEDDDEGDST), 459–468 (EEEDEDDDDE), and 484–497 (EDDGGDDDDGDDST). 10 consecutive repeat copies span residues 199-224 (HRHRGHGKEDEEDEDDDSTESDRHQA), 225-253 (HRHRGHREEEDEDDDDDEGDSTESDHHQA), 254-282 (HRHRGHEEEEDEEDDDDEGDSTESDRHQA), 283-310 (HRHRGHREEEDEDDDDEGDSTESDRHQA), 311-339 (HRHRGHREEEDDDDDDDEGDSTESDRHQA), 340-367 (HRHRGHREEEDEDDDDEGDSTESDRHQA), 368-395 (HRHRGHREEEDEDDDDEGDSTESDRHQA), 396-423 (HRHRGHREEEDEDDDDEGDSTESDHHQA), 424-451 (HRHRGHREEEDEEDDDEGDSTESDRHQA), and 452-470 (HRHRGHGEEEDEDDDDEGE). Residues 199-470 (HRHRGHGKED…EDEDDDDEGE (272 aa)) are 10 X tandem repeats, acidic. The tract at residues 471 to 585 (HHHVPHRGHR…HHVASHPPPG (115 aa)) is 4 X approximate tandem repeats. Basic and acidic residues predominate over residues 509-536 (HGKEEAEVTSDEHHHHVPDHGHQGHGDK). Residues Ser-518, Ser-544, and Ser-614 each carry the phosphoserine modification. Basic and acidic residues-rich tracts occupy residues 587-619 (RSREGHAEEHQTEVPGHHQHRMGDTDTSAERGH), 630-646 (PPEDTVHHHRGSLKEEV), and 658-681 (DGSRVKRGGSEEEEEQKGTHHHSL). The segment covering 722–733 (EEEEEEEEEEEE) has biased composition (acidic residues). The segment covering 746-757 (SGREAAGGASSE) has biased composition (low complexity). A compositionally biased stretch (acidic residues) spans 758–769 (ESAEDTGPEDTQ). Positions 780 to 826 (CGYCTFCNRCTECEHCHCDEDSMGEHCDQCQHCQFCYLCPLVCETVC) are metal-binding.

The protein belongs to the HRC family. Post-translationally, the N-terminus is blocked.

The protein localises to the sarcoplasmic reticulum lumen. May play a role in the regulation of calcium sequestration or release in the SR of skeletal and cardiac muscle. The polypeptide is Sarcoplasmic reticulum histidine-rich calcium-binding protein (HRC) (Oryctolagus cuniculus (Rabbit)).